Reading from the N-terminus, the 420-residue chain is Mannose-1-phosphate guanylyltransferase regulatory subunit alpha (420 aa).

The tract at residues 2-251 (LKAVILIGGP…DGIWSQIKSA (250 aa)) is substrate-binding domain. Glu85 and Gln247 together coordinate GDP-alpha-D-mannose. Residues 273 to 420 (LAKHTPGGPR…SRSFTNQIIL (148 aa)) are hexapeptide repeat domain. The C-loop stretch occupies residues 356–384 (TPNDPNPNDPRAHMDSESLFKDGKLLPAI).

The protein belongs to the transferase hexapeptide repeat family. As to quaternary structure, component of the GMPPA-GMPPB mannose-1-phosphate guanylyltransferase complex composed of 4 GMPPA subunits and 8 GMPPB subunits; the complex is organized into three layers, a central layer made up of 2 GMPPA dimers sandwiched between two layers each made up of 2 GMPPB dimers. As to expression, expressed in the liver (at protein level).

It localises to the cytoplasm. Regulatory subunit of the GMPPA-GMPPB mannose-1-phosphate guanylyltransferase complex; reduces the catalytic activity of GMPPB when part of the complex. Mediates allosteric feedback inhibition of GMPPB catalytic activity upon binding GDP-alpha-D-mannose. Together with GMPPB regulates GDP-alpha-D-mannose levels. This is Mannose-1-phosphate guanylyltransferase regulatory subunit alpha (GMPPA) from Sus scrofa (Pig).